Reading from the N-terminus, the 198-residue chain is NAD(P)H dehydrogenase (quinone) (198 aa).

Residues 6 to 190 (ILVLYYSRHG…LCRALGKRLA (185 aa)) enclose the Flavodoxin-like domain. FMN-binding positions include 12–17 (SRHGAT), 79–81 (TRF), 114–120 (STASLHG), and His-135.

This sequence belongs to the WrbA family. In terms of assembly, homodimer. The cofactor is FMN.

The enzyme catalyses a quinone + NADH + H(+) = a quinol + NAD(+). The catalysed reaction is a quinone + NADPH + H(+) = a quinol + NADP(+). The chain is NAD(P)H dehydrogenase (quinone) from Pseudomonas aeruginosa (strain ATCC 15692 / DSM 22644 / CIP 104116 / JCM 14847 / LMG 12228 / 1C / PRS 101 / PAO1).